The following is a 607-amino-acid chain: UvrABC system protein C (607 aa).

Positions 16–94 (GRPGVYRMFD…IKEWRPPYNI (79 aa)) constitute a GIY-YIG domain. One can recognise a UVR domain in the interval 203–238 (NALTDELSTAMEAAASTLDFEKAAELRDQISLLRRV).

This sequence belongs to the UvrC family. In terms of assembly, interacts with UvrB in an incision complex.

Its subcellular location is the cytoplasm. The UvrABC repair system catalyzes the recognition and processing of DNA lesions. UvrC both incises the 5' and 3' sides of the lesion. The N-terminal half is responsible for the 3' incision and the C-terminal half is responsible for the 5' incision. This Pseudomonas fluorescens (strain ATCC BAA-477 / NRRL B-23932 / Pf-5) protein is UvrABC system protein C.